We begin with the raw amino-acid sequence, 874 residues long: Probable inorganic carbon transporter subunit DabA (874 aa).

Residues Cys398, Asp400, His580, and Cys595 each contribute to the Zn(2+) site.

The protein belongs to the inorganic carbon transporter (TC 9.A.2) DabA family. In terms of assembly, forms a complex with DabB. Requires Zn(2+) as cofactor.

It localises to the cell membrane. Functionally, part of an energy-coupled inorganic carbon pump. This Bacillus cereus (strain ATCC 10987 / NRS 248) protein is Probable inorganic carbon transporter subunit DabA.